A 397-amino-acid chain; its full sequence is S-adenosylmethionine synthase (397 aa).

His-17 serves as a coordination point for ATP. Asp-19 is a Mg(2+) binding site. Residue Glu-45 coordinates K(+). L-methionine-binding residues include Glu-58 and Gln-101. The interval 101–111 (QSPDIAQGVDK) is flexible loop. ATP contacts are provided by residues 176–178 (DGK), 243–244 (RF), Asp-252, 258–259 (RK), and Lys-279. Asp-252 provides a ligand contact to L-methionine. Position 283 (Lys-283) interacts with L-methionine.

This sequence belongs to the AdoMet synthase family. In terms of assembly, homotetramer; dimer of dimers. Mg(2+) serves as cofactor. K(+) is required as a cofactor.

Its subcellular location is the cytoplasm. It carries out the reaction L-methionine + ATP + H2O = S-adenosyl-L-methionine + phosphate + diphosphate. The protein operates within amino-acid biosynthesis; S-adenosyl-L-methionine biosynthesis; S-adenosyl-L-methionine from L-methionine: step 1/1. Catalyzes the formation of S-adenosylmethionine (AdoMet) from methionine and ATP. The overall synthetic reaction is composed of two sequential steps, AdoMet formation and the subsequent tripolyphosphate hydrolysis which occurs prior to release of AdoMet from the enzyme. The protein is S-adenosylmethionine synthase of Staphylococcus aureus.